The following is a 355-amino-acid chain: 6-aminohexanoate-oligomer endohydrolase (355 aa).

The Nucleophile role is filled by T267.

It belongs to the peptidase S58 family. As to quaternary structure, heterotetramer composed of 4 alpha/beta heterodimers. Exists at the monomer/dimer/trimer equilibrium in aqueous solution. Post-translationally, expressed as an inactive precursor that is cleaved autocatalytically at Asn266/Thr267 to generate an active enzyme composed of an alpha subunit and a beta subunit.

It catalyses the reaction [N-(6-aminohexanoyl)]n + H2O = [N-(6-aminohexanoyl)]n-x + [N-(6-aminohexanoyl)]x.. Its pathway is xenobiotic degradation; nylon-6 oligomer degradation. Involved in the degradation of nylon-6 oligomers. Degrades cyclic and linear oligomers of 6-aminohexanoate (Ahx) with a degree of polymerization greater than three by an endo-type mode. Cannot use Ahx cyclic dimer or the Ahx linear dimer. The chain is 6-aminohexanoate-oligomer endohydrolase from Paenarthrobacter ureafaciens.